The following is a 265-amino-acid chain: MESQLFNAPAKKAFGQHFLVDRYYIDRIIHAITPQPNDHIVEIGPGQGAITLPLLKCCGSLTAIELDRDLIAPLTAAATPLGKLDIIHRDVLTVDLSILAKPGNKKLRLVGNLPYNISSPILFHVLQQAAIIADMHFMLQKEVVDRMAAPPGSKVYGRLSVMLQAWCEVTTMFVVPPDAFQPPPKVNSAITRLVPRDPTTIRIADTKRFSDIVRAAFGQRRKTLRNSLADICTPAHFEHAGIRTNARAEQLEVTEFIALANAKDT.

S-adenosyl-L-methionine is bound by residues His-17, Leu-19, Gly-44, Glu-65, Asp-90, and Asn-112.

The protein belongs to the class I-like SAM-binding methyltransferase superfamily. rRNA adenine N(6)-methyltransferase family. RsmA subfamily.

It is found in the cytoplasm. The enzyme catalyses adenosine(1518)/adenosine(1519) in 16S rRNA + 4 S-adenosyl-L-methionine = N(6)-dimethyladenosine(1518)/N(6)-dimethyladenosine(1519) in 16S rRNA + 4 S-adenosyl-L-homocysteine + 4 H(+). In terms of biological role, specifically dimethylates two adjacent adenosines (A1518 and A1519) in the loop of a conserved hairpin near the 3'-end of 16S rRNA in the 30S particle. May play a critical role in biogenesis of 30S subunits. The chain is Ribosomal RNA small subunit methyltransferase A from Xylella fastidiosa (strain 9a5c).